Here is a 994-residue protein sequence, read N- to C-terminus: ASI1-immunoprecipitated protein 2 (994 aa).

Disordered stretches follow at residues 39–182 (AEFS…SGEN) and 187–206 (KADESNTSAMSDSESENDPE). Basic and acidic residues predominate over residues 45–54 (KSDESSDENS). The span at 60-102 (SQCSFNGDNLLRSSGVNAPGSSHNTSSEASHLVNSNHDTSSEN) shows a compositional bias: polar residues. Composition is skewed to basic and acidic residues over residues 119 to 140 (LLDRPHKDQDSMKVDSCNDHQA) and 148 to 163 (KVKEKSGAKNNEEKKN). A PHD-type zinc finger spans residues 212–263 (VKVCDTCGDAGREDLLAICSRCSDGAEHTYCMRVMLKKVPKGYWLCEECKFA). Cysteine 215, cysteine 218, cysteine 230, cysteine 233, histidine 239, cysteine 242, cysteine 257, and cysteine 260 together coordinate Zn(2+). 2 disordered regions span residues 342 to 567 (AHYS…NNKG) and 839 to 875 (CSNPPKNTPLPASCVSPNRDTFRHENPSNKKSLTDRT). Residues 371-384 (SFLKSNSFNSLSSR) are compositionally biased toward low complexity. 2 stretches are compositionally biased toward polar residues: residues 417 to 435 (VGKSMSSRCIDVGSSNCND) and 449 to 464 (TEANPSASISRGNSSI). 3 stretches are compositionally biased toward basic and acidic residues: residues 469–478 (SPRDLKDLQS), 536–552 (PRSREFREAGEKTKDAV), and 858–875 (DTFRHENPSNKKSLTDRT).

In terms of assembly, component of the ASI1-AIPP1-EDM2 (AAE) RNA regulatory complex composed of at least AIPP1/EDM3, ASI1 and EDM2 and may contain CPL2, AIPP2 and AIPP3/BDT1. Part of the BAH-PHD bivalent histone reader complex that contains AIPP2, PAIPP2 and AIPP3/BDT1; the BAH-PHD module associates with CPL2 to form the BAH-PHD-CPL2 complex (BPC) for transcriptional repression. Binds directly to ASI1, AIPP3/BDT1 and CPL2 but not to PAIPP2. In terms of tissue distribution, expressed ubiquitously.

Functionally, together with AIPP3/BDT1 and PAIPP2, cooperates to form a BAH-PHD bivalent histone reader complex able to read histone H3 lysine 27 trimethylation (H3K27me3) and low-methylated H3K4 histone marks in order to regulate transcription, especially to prevent early flowering; promotes AIPP3/BDT1 binding to H3K27me3. CPL2 is subsequently recruited to form a BAH-PHD-CPL2 complex (BPC) in order to silence several H3K27me3 and low-methylated H3K4 enriched loci, including AGO5, via the phosphorylation state-dependent inhibition of Pol II release from the transcriptional start site (e.g. Ser5P-Pol II dephosphorylation). The BPC complex represses flowering by inhibiting the expression of several genes, including AGL6, FT, FUL and SOC1. Prevents the accumulation of intronic heterochromatin-containing genes (e.g. IBM1, At3g05410 and RPP7). The protein is ASI1-immunoprecipitated protein 2 of Arabidopsis thaliana (Mouse-ear cress).